A 178-amino-acid polypeptide reads, in one-letter code: Ribosome maturation factor RimP (178 aa).

It belongs to the RimP family.

It is found in the cytoplasm. In terms of biological role, required for maturation of 30S ribosomal subunits. This is Ribosome maturation factor RimP from Mycolicibacterium paratuberculosis (strain ATCC BAA-968 / K-10) (Mycobacterium paratuberculosis).